The sequence spans 299 residues: HTH-type transcriptional regulator CysL (299 aa).

In terms of domain architecture, HTH lysR-type spans 1–58 (MYYDVLKTFIAVVEEKNFTKAAEKLMISQPSVSLHIKNLEKEFQTALLNRSPKHFTTT). The segment at residues 18–37 (FTKAAEKLMISQPSVSLHIK) is a DNA-binding region (H-T-H motif).

This sequence belongs to the LysR transcriptional regulatory family.

Transcriptional activator of the cysJI operon which is involved in sulfur assimilation. Also negatively regulates its own transcription. In Bacillus subtilis (strain 168), this protein is HTH-type transcriptional regulator CysL (cysL).